Consider the following 310-residue polypeptide: MDRKELLSRPVRDLSITADTRLGDLMDQFSSIGGFTAAKIHEAYEIIKDMFSEDNTTFLSFPADIISTGLRGLINEVVKRKLVDVIITTSGTLDHDIARTYRNYYCGSFSYSDIELRDLGINRLGNVLVPDESYGEIIEEKVMESLEKLYAKKKEWATVDLIHEVGLDINSESSIIYNAAKNNIPVFVPGITDGSFGSQLWSFYEQHHDFKINLLEDEHRLSDIIFDAKKTGAIMIGGGISKHHTIWWNQFRDGLDYAVYVTTAQEYDGSLSGAKLEEAISWKKVRPDARYVNVYGDATVIMPVLLAPFL.

The Nucleophile role is filled by lysine 284.

This sequence belongs to the deoxyhypusine synthase family. NAD(+) is required as a cofactor.

It catalyses the reaction [eIF5A protein]-L-lysine + spermidine = [eIF5A protein]-deoxyhypusine + propane-1,3-diamine. It participates in protein modification; eIF5A hypusination. Functionally, catalyzes the NAD-dependent oxidative cleavage of spermidine and the subsequent transfer of the butylamine moiety of spermidine to the epsilon-amino group of a specific lysine residue of the eIF-5A precursor protein to form the intermediate deoxyhypusine residue. This chain is Probable deoxyhypusine synthase (dys), found in Thermoplasma acidophilum (strain ATCC 25905 / DSM 1728 / JCM 9062 / NBRC 15155 / AMRC-C165).